A 315-amino-acid polypeptide reads, in one-letter code: Mitochondrial glutamate carrier 2 (315 aa).

Solcar repeat units follow at residues 6-92 (LSIT…FRRL), 100-210 (RNLK…LNNL), and 219-308 (ASFA…GIGE). 3 helical membrane passes run 12–32 (LING…IDLA), 61–81 (FFGM…EKAI), and 106–126 (MLAG…MEML). The disordered stretch occupies residues 141-160 (QGSASAPSTSRSYTTGSAST). The span at 142–159 (GSASAPSTSRSYTTGSAS) shows a compositional bias: polar residues. Phosphoserine is present on serine 145. 3 consecutive transmembrane segments (helical) span residues 185 to 205 (GLGA…PLFA), 225 to 245 (FVSG…LDVL), and 288 to 308 (ALVI…GIGE).

The protein belongs to the mitochondrial carrier (TC 2.A.29) family. As to expression, expressed in brain, to a lesser extent in testis, and poorly in all the other tissues.

The protein localises to the mitochondrion inner membrane. It catalyses the reaction L-glutamate(in) + H(+)(in) = L-glutamate(out) + H(+)(out). Functionally, responsible for the transport of glutamate from the cytosol into the mitochondrial matrix with the concomitant import of a proton (symport system). The polypeptide is Mitochondrial glutamate carrier 2 (Homo sapiens (Human)).